The primary structure comprises 439 residues: Gap junction gamma-2 protein (439 aa).

Topologically, residues 1–25 (MTNMSWSFLTRLLEEIHNHSTFVGK) are cytoplasmic. The helical transmembrane segment at 26–46 (VWLTVLVVFRIVLTAVGGEAI) threads the bilayer. Topologically, residues 47-78 (YSDEQAKFTCNTRQPGCDNVCYDAFAPLSHVR) are extracellular. Residues 79–99 (FWVFQIVVISTPSVMYLGYAV) traverse the membrane as a helical segment. Residues 100-216 (HRLARASEQE…EGLMRVYVAQ (117 aa)) are Cytoplasmic-facing. Residues 108–178 (QERRRALRRR…AEEAGAEEAC (71 aa)) are disordered. Residues 112–125 (RALRRRPGPRRAPR) are compositionally biased toward basic residues. Residues 140–174 (DLGEEEPMLGLGEEEEEEETGAAEGAGEEAEEAGA) show a composition bias toward acidic residues. Residues 217–237 (LVARAAFEVAFLVGQYLLYGF) form a helical membrane-spanning segment. Over 238–265 (EVRPFFPCSRQPCPHVVDCFVSRPTEKT) the chain is Extracellular. A helical transmembrane segment spans residues 266–286 (VFLLVMYVVSCLCLLLNLCEM). Topologically, residues 287-439 (AHLGLGSAQD…SRDGKTTVWI (153 aa)) are cytoplasmic. A disordered region spans residues 364–439 (AGDRDRDSSP…SRDGKTTVWI (76 aa)). Ser-371 bears the Phosphoserine mark. The span at 378-393 (PAASRGPPRAGAPASR) shows a compositional bias: low complexity.

The protein belongs to the connexin family. Gamma-type subfamily. In terms of assembly, a connexon is composed of a hexamer of connexins. Interacts with TJP1. Expressed in central nervous system, in sciatic nerve and sural nerve. Also detected in skeletal muscles.

The protein resides in the cell membrane. Its subcellular location is the cell junction. It is found in the gap junction. In terms of biological role, one gap junction consists of a cluster of closely packed pairs of transmembrane channels, the connexons, through which materials of low MW diffuse from one cell to a neighboring cell. May play a role in myelination in central and peripheral nervous systems. The sequence is that of Gap junction gamma-2 protein (GJC2) from Homo sapiens (Human).